We begin with the raw amino-acid sequence, 233 residues long: UPF0502 protein YPTS_2082 (233 aa).

It belongs to the UPF0502 family.

This Yersinia pseudotuberculosis serotype IB (strain PB1/+) protein is UPF0502 protein YPTS_2082.